A 116-amino-acid polypeptide reads, in one-letter code: Ig heavy chain V region 1B43 (116 aa).

The signal sequence occupies residues 1 to 18 (MRVLILLCLFTAFPGILS). Residues 19–48 (DVQLQESGPDLVKPSQSLSLTCTVTGYSIT) are framework-1. Cys40 and Cys114 are oxidised to a cystine. Positions 49-53 (SGYSW) are complementarity-determining-1. Positions 54–67 (HWIRQFPGNKLEWM) are framework-2. Residues 68–84 (GYIHYSGNTSYNPSLKS) form a complementarity-determining-2 region. Residues 85–116 (RISITRDTSKNQFFLQLNSVTTEDTATYYCAR) form a framework-3 region.

The sequence is that of Ig heavy chain V region 1B43 from Mus musculus (Mouse).